The following is a 306-amino-acid chain: Acetyl-coenzyme A carboxylase carboxyl transferase subunit beta (306 aa).

The 270-residue stretch at 25–294 (LWIKDPTSGE…APEPSHAFSK (270 aa)) folds into the CoA carboxyltransferase N-terminal domain. The tract at residues 287 to 306 (EPSHAFSKDSQTQISKTKAA) is disordered. A compositionally biased stretch (polar residues) spans 294–306 (KDSQTQISKTKAA).

It belongs to the AccD/PCCB family. In terms of assembly, acetyl-CoA carboxylase is a heterohexamer composed of biotin carboxyl carrier protein (AccB), biotin carboxylase (AccC) and two subunits each of ACCase subunit alpha (AccA) and ACCase subunit beta (AccD).

It is found in the cytoplasm. The enzyme catalyses N(6)-carboxybiotinyl-L-lysyl-[protein] + acetyl-CoA = N(6)-biotinyl-L-lysyl-[protein] + malonyl-CoA. It functions in the pathway lipid metabolism; malonyl-CoA biosynthesis; malonyl-CoA from acetyl-CoA: step 1/1. Functionally, component of the acetyl coenzyme A carboxylase (ACC) complex. Biotin carboxylase (BC) catalyzes the carboxylation of biotin on its carrier protein (BCCP) and then the CO(2) group is transferred by the transcarboxylase to acetyl-CoA to form malonyl-CoA. The sequence is that of Acetyl-coenzyme A carboxylase carboxyl transferase subunit beta from Bartonella bacilliformis (strain ATCC 35685 / KC583 / Herrer 020/F12,63).